The chain runs to 777 residues: Double zinc ribbon and ankyrin repeat-containing protein 1 (777 aa).

Basic and acidic residues predominate over residues 161–176 (QVGERTDPKTLKDLRF). Positions 161–202 (QVGERTDPKTLKDLRFSESPLEIPAHSGGSGSRPPTRQSQSP) are disordered. The span at 193-202 (RPPTRQSQSP) shows a compositional bias: polar residues. S201 carries the phosphoserine modification. 2 consecutive DZANK-type zinc fingers follow at residues 230–289 (CAHC…CVVC) and 358–406 (CSRC…GSCG). ANK repeat units lie at residues 442–473 (NIPL…LLAK) and 477–506 (EIAS…GYWR).

As to quaternary structure, interacts with NINL. Associates with DYNC1H1 and multiple dynein intermediate and light chains as well as actin-binding proteins.

It localises to the cytoplasm. The protein localises to the cytoskeleton. The protein resides in the microtubule organizing center. Its subcellular location is the centrosome. It is found in the cilium basal body. Functionally, involved in vesicle transport in photoreceptor cells. The protein is Double zinc ribbon and ankyrin repeat-containing protein 1 (DZANK1) of Macaca fascicularis (Crab-eating macaque).